A 432-amino-acid chain; its full sequence is Adenylosuccinate synthetase (432 aa).

Residues 13-19 (GDEGKGK) and 41-43 (GHT) contribute to the GTP site. Catalysis depends on D14, which acts as the Proton acceptor. Mg(2+)-binding residues include D14 and G41. IMP-binding positions include 14-17 (DEGK), 39-42 (NAGH), T130, R144, Q225, T240, and R304. H42 serves as the catalytic Proton donor. 300 to 306 (AVTGRPR) serves as a coordination point for substrate. GTP contacts are provided by residues R306, 332-334 (KLD), and 415-417 (STG).

Belongs to the adenylosuccinate synthetase family. Homodimer. Requires Mg(2+) as cofactor.

Its subcellular location is the cytoplasm. It carries out the reaction IMP + L-aspartate + GTP = N(6)-(1,2-dicarboxyethyl)-AMP + GDP + phosphate + 2 H(+). The protein operates within purine metabolism; AMP biosynthesis via de novo pathway; AMP from IMP: step 1/2. Plays an important role in the de novo pathway of purine nucleotide biosynthesis. Catalyzes the first committed step in the biosynthesis of AMP from IMP. The sequence is that of Adenylosuccinate synthetase from Histophilus somni (strain 2336) (Haemophilus somnus).